The primary structure comprises 523 residues: FAD:protein FMN transferase (523 aa).

Helical transmembrane passes span 88 to 108, 118 to 138, and 169 to 189; these read LLAG…VALA, GGAA…LVLL, and GLAL…TAPA. FAD is bound by residues 277 to 279 and Asp336; that span reads LFD. Ala339 contacts Mg(2+). Residues Lys342 and 423 to 425 each bind FAD; that span reads HII. Asp450 and Thr454 together coordinate Mg(2+).

The protein in the N-terminal section; belongs to the RseC family. It in the C-terminal section; belongs to the ApbE family. Mg(2+) is required as a cofactor.

The protein resides in the cell membrane. It carries out the reaction L-threonyl-[protein] + FAD = FMN-L-threonyl-[protein] + AMP + H(+). Its function is as follows. Flavin transferase that catalyzes the transfer of the FMN moiety of FAD and its covalent binding to the hydroxyl group of a threonine residue in a target flavoprotein. Is likely involved in the modification of RnfG and RnfD. Required for nitrogen fixation. The sequence is that of FAD:protein FMN transferase from Rhodobacter capsulatus (Rhodopseudomonas capsulata).